The sequence spans 335 residues: Putative T-box protein 7 (335 aa).

Positions 73–246 form a DNA-binding region, T-box; it reads LWSTFLECGT…NNPFAKGFRN (174 aa).

It localises to the nucleus. This is Putative T-box protein 7 from Caenorhabditis elegans.